Here is a 299-residue protein sequence, read N- to C-terminus: Dihydroorotate dehydrogenase B (NAD(+)), catalytic subunit (299 aa).

Residues S19 and 43–44 (KS) each bind FMN. Substrate-binding positions include K43, 67 to 71 (NAMGL), and N121. N121 contacts FMN. The active-site Nucleophile is the C124. FMN-binding residues include K159 and I185. 186-187 (NT) is a substrate binding site. FMN contacts are provided by residues G211, 237–238 (GG), and 259–260 (GT).

Belongs to the dihydroorotate dehydrogenase family. Type 1 subfamily. In terms of assembly, heterotetramer of 2 PyrK and 2 PyrD type B subunits. Requires FMN as cofactor.

The protein resides in the cytoplasm. The catalysed reaction is (S)-dihydroorotate + NAD(+) = orotate + NADH + H(+). It functions in the pathway pyrimidine metabolism; UMP biosynthesis via de novo pathway; orotate from (S)-dihydroorotate (NAD(+) route): step 1/1. Catalyzes the conversion of dihydroorotate to orotate with NAD(+) as electron acceptor. In Pyrococcus abyssi (strain GE5 / Orsay), this protein is Dihydroorotate dehydrogenase B (NAD(+)), catalytic subunit (pyrD).